The sequence spans 135 residues: Galectin-1 (135 aa).

N-acetylalanine is present on Ala-2. In terms of domain architecture, Galectin spans 4 to 135; it reads GLVASNLNLK…DFKIKCVAFE (132 aa). Lys-13 and Lys-29 each carry N6-acetyllysine. Ser-30 bears the Phosphoserine mark. A beta-D-galactoside contacts are provided by residues 45–49, His-53, Asn-62, and 69–72; these read HFNPR and WGAE. Lys-108 carries the N6-acetyllysine; alternate modification. At Lys-108 the chain carries N6-succinyllysine; alternate. At Lys-128 the chain carries N6-acetyllysine.

As to quaternary structure, homodimer. Binds LGALS3BP. Interacts with CD2, CD3, CD4, CD6, CD7, CD43, ALCAM and CD45. Interacts with laminin (via poly-N-acetyllactosamine). Interacts with SUSD2. Interacts with cargo receptor TMED10; the interaction mediates the translocation from the cytoplasm into the ERGIC (endoplasmic reticulum-Golgi intermediate compartment) and thereby secretion.

The protein resides in the secreted. It localises to the extracellular space. Its subcellular location is the extracellular matrix. It is found in the cytoplasm. Its function is as follows. Lectin that binds beta-galactoside and a wide array of complex carbohydrates. Plays a role in regulating apoptosis, cell proliferation and cell differentiation. Inhibits CD45 protein phosphatase activity and therefore the dephosphorylation of Lyn kinase. Strong inducer of T-cell apoptosis. This chain is Galectin-1 (LGALS1), found in Bos taurus (Bovine).